Consider the following 727-residue polypeptide: Glucans biosynthesis glucosyltransferase H (727 aa).

Positions 18–45 are disordered; the sequence is SAMPNERPGAMEPQSLTEMPEGFPRRST. 7 helical membrane-spanning segments follow: residues 58-78, 90-110, 278-298, 408-428, 460-480, 496-516, and 572-592; these read FFVV…MGAV, LVLL…CSGI, LQQF…GWWV, IMAY…LMLA, LFYI…LLLL, IFSV…MMFI, and LLAW…ISAW.

The protein belongs to the glycosyltransferase 2 family. OpgH subfamily.

It localises to the cell inner membrane. The protein operates within glycan metabolism; osmoregulated periplasmic glucan (OPG) biosynthesis. Functionally, involved in the biosynthesis of osmoregulated periplasmic glucans (OPGs). In Shewanella putrefaciens (strain CN-32 / ATCC BAA-453), this protein is Glucans biosynthesis glucosyltransferase H.